We begin with the raw amino-acid sequence, 107 residues long: Snaclec VP12 subunit A (107 aa).

2 cysteine pairs are disulfide-bonded: C4-C15 and C32-C107. In terms of domain architecture, C-type lectin spans 11–107; sequence YEGNCYKAFD…ECGLAYPFIC (97 aa).

The protein belongs to the snaclec family. As to quaternary structure, heterodimer of subunits alpha and beta; disulfide-linked. As to expression, expressed by the venom gland.

The protein localises to the secreted. Its function is as follows. Inhibits integrin alpha-2/beta-1- (ITGA2/ITGB1) dependent melanoma metastasis. The polypeptide is Snaclec VP12 subunit A (Daboia palaestinae (Palestine viper)).